The following is a 245-amino-acid chain: Large ribosomal subunit protein eL29 (245 aa).

Residues 1-26 (MAKSKNHTTHNQSRKWHRNGIKKPRS) are compositionally biased toward basic residues. 2 disordered regions span residues 1 to 33 (MAKSKNHTTHNQSRKWHRNGIKKPRSQRYESLK) and 114 to 245 (RGLR…AKAP). Residue Lys5 is modified to N6-methyllysine. Ser31 carries the phosphoserine modification. Lys33 carries the N6-acetyllysine modification. Residues 134 to 150 (KGKVKAQIKAQAQAQIK) show a composition bias toward low complexity. Positions 157–171 (AQAETKPKAQAETKP) are enriched in basic and acidic residues. 2 stretches are compositionally biased toward low complexity: residues 172–226 (KAQA…ATPA) and 234–245 (PPKGAQPPAKAP).

This sequence belongs to the eukaryotic ribosomal protein eL29 family. In terms of assembly, component of the large ribosomal subunit.

The protein resides in the cytoplasm. In terms of biological role, component of the large ribosomal subunit. The ribosome is a large ribonucleoprotein complex responsible for the synthesis of proteins in the cell. The chain is Large ribosomal subunit protein eL29 (RPL29) from Oryctolagus cuniculus (Rabbit).